The primary structure comprises 564 residues: Hsp70-Hsp90 organising protein (564 aa).

TPR repeat units lie at residues 7 to 40, 42 to 74, and 76 to 108; these read AQRL…DPLD, VLYS…KKDW, and KGYI…DPNN. A coiled-coil region spans residues 197–239; it reads EGNDAEERQRQQREEEERRKKKEEEERKKKEEEEMKKQNRTPE. The segment at 199 to 247 is disordered; sequence NDAEERQRQQREEEERRKKKEEEERKKKEEEEMKKQNRTPEQIQGDEHK. Basic and acidic residues predominate over residues 201–233; sequence AEERQRQQREEEERRKKKEEEERKKKEEEEMKK. TPR repeat units follow at residues 243-276, 278-310, 318-351, 378-411, 413-445, and 446-479; these read GDEH…NPND, MYHY…RYNF, AKLY…DNNR, AEEH…NPND, KLYS…DPTF, and VKAY…DPNN. An STI1 domain is found at 513-552; that stretch reads DPEIQQIISDPQFQIILQKLNENPNSISEYIKDPKIFNGL.

As to quaternary structure, monomer. Homodimer. Forms a complex composed of HOP and chaperones HSP70 and HSP90; the interaction is stronger in the absence of ATP. Interacts (via TPR 1, 2, 3, 7, 8 and 9 repeats) with HSP70 (via C-terminus); the interaction is direct and is stronger in the absence of ATP. Interacts (via TPR 4, 5 and 6 repeats) with HSP90 (via C-terminus); the interaction is direct.

Its subcellular location is the cytoplasm. Acts as a co-chaperone and mediates the association of the chaperones HSP70 and HSP90 probably facilitating substrate transfer from HSP70 to HSP90. Stimulates HSP70 ATPase activity and, in contrast, inhibits HSP90 ATPase activity. The sequence is that of Hsp70-Hsp90 organising protein from Plasmodium falciparum (isolate 3D7).